A 117-amino-acid chain; its full sequence is Large ribosomal subunit protein bL20 (117 aa).

This sequence belongs to the bacterial ribosomal protein bL20 family.

Binds directly to 23S ribosomal RNA and is necessary for the in vitro assembly process of the 50S ribosomal subunit. It is not involved in the protein synthesizing functions of that subunit. The protein is Large ribosomal subunit protein bL20 of Solidesulfovibrio magneticus (strain ATCC 700980 / DSM 13731 / RS-1) (Desulfovibrio magneticus).